Here is a 236-residue protein sequence, read N- to C-terminus: Thiamine import ATP-binding protein ThiQ (236 aa).

One can recognise an ABC transporter domain in the interval 2–230 (LKLEKITYLY…SAAKASVLGI (229 aa)). 32-39 (GPSGAGKS) is an ATP binding site.

The protein belongs to the ABC transporter superfamily. Thiamine importer (TC 3.A.1.19.1) family. As to quaternary structure, the complex is composed of two ATP-binding proteins (ThiQ), two transmembrane proteins (ThiP) and a solute-binding protein (ThiB).

Its subcellular location is the cell inner membrane. The catalysed reaction is thiamine(out) + ATP + H2O = thiamine(in) + ADP + phosphate + H(+). Its function is as follows. Part of the ABC transporter complex ThiBPQ involved in thiamine import. Responsible for energy coupling to the transport system. This is Thiamine import ATP-binding protein ThiQ from Yersinia pseudotuberculosis serotype I (strain IP32953).